A 405-amino-acid chain; its full sequence is Deoxyguanosinetriphosphate triphosphohydrolase-like protein (405 aa).

One can recognise an HD domain in the interval 75 to 219 (RLTHTIEVAQ…AAIADDIAYN (145 aa)).

The protein belongs to the dGTPase family. Type 2 subfamily.

The sequence is that of Deoxyguanosinetriphosphate triphosphohydrolase-like protein from Rhizobium etli (strain CIAT 652).